The sequence spans 852 residues: Exported protein YdbA (852 aa).

A signal peptide spans M1 to A21. 5 disordered regions span residues T30–P50, D91–D145, T307–D354, T407–Q449, and N506–K531. Over residues T307–G319 the composition is skewed to low complexity. Residues G339–K348 show a composition bias toward polar residues. A compositionally biased stretch (low complexity) spans N506 to N516. Residues D517–T526 are compositionally biased toward polar residues.

It is found in the secreted. Functionally, the full-length protein (which is about 2000 amino acids long) is part of the autotransporter family. This Escherichia coli (strain K12) protein is Exported protein YdbA (ydbA).